Consider the following 124-residue polypeptide: Small ribosomal subunit protein uS12 (124 aa).

Asp-89 carries the 3-methylthioaspartic acid modification. A disordered region spans residues 105–124 (QGVKNRKQARSRYGAKKEKS). Residues 108-118 (KNRKQARSRYG) are compositionally biased toward basic residues.

It belongs to the universal ribosomal protein uS12 family. In terms of assembly, part of the 30S ribosomal subunit. Contacts proteins S8 and S17. May interact with IF1 in the 30S initiation complex.

Functionally, with S4 and S5 plays an important role in translational accuracy. Interacts with and stabilizes bases of the 16S rRNA that are involved in tRNA selection in the A site and with the mRNA backbone. Located at the interface of the 30S and 50S subunits, it traverses the body of the 30S subunit contacting proteins on the other side and probably holding the rRNA structure together. The combined cluster of proteins S8, S12 and S17 appears to hold together the shoulder and platform of the 30S subunit. This chain is Small ribosomal subunit protein uS12, found in Mycobacterium sp. (strain JLS).